Here is a 1401-residue protein sequence, read N- to C-terminus: DNA-directed RNA polymerase subunit beta' (1401 aa).

Positions 71, 73, 86, and 89 each coordinate Zn(2+). Mg(2+)-binding residues include Asp-462, Asp-464, and Asp-466. Zn(2+) is bound by residues Cys-810, Cys-884, Cys-891, and Cys-894. The interval 1378-1401 is disordered; sequence EKQATIVPSAPEPEPLALPTPEQS.

Belongs to the RNA polymerase beta' chain family. As to quaternary structure, the RNAP catalytic core consists of 2 alpha, 1 beta, 1 beta' and 1 omega subunit. When a sigma factor is associated with the core the holoenzyme is formed, which can initiate transcription. Mg(2+) is required as a cofactor. Zn(2+) serves as cofactor.

It carries out the reaction RNA(n) + a ribonucleoside 5'-triphosphate = RNA(n+1) + diphosphate. In terms of biological role, DNA-dependent RNA polymerase catalyzes the transcription of DNA into RNA using the four ribonucleoside triphosphates as substrates. The chain is DNA-directed RNA polymerase subunit beta' from Rhodopseudomonas palustris (strain BisB18).